The following is a 199-amino-acid chain: Chaperone protein TorD (199 aa).

It belongs to the TorD/DmsD family. TorD subfamily.

It localises to the cytoplasm. Functionally, involved in the biogenesis of TorA. Acts on TorA before the insertion of the molybdenum cofactor and, as a result, probably favors a conformation of the apoenzyme that is competent for acquiring the cofactor. This chain is Chaperone protein TorD, found in Escherichia coli O157:H7 (strain EC4115 / EHEC).